The following is a 453-amino-acid chain: uncharacterized protein (453 aa).

Positions 5–63 constitute a TRAM domain; that stretch reads LLKKNQSIELTIEDLTHDGSGVGKIDGYPLFIPNTLPGEKVTAKIIKLNKNYGFARMEN. Cys76, Cys82, Cys85, and Cys162 together coordinate [4Fe-4S] cluster. Residues Gln285, Tyr314, Glu335, and Asp383 each coordinate S-adenosyl-L-methionine. The Nucleophile role is filled by Cys410.

The protein belongs to the class I-like SAM-binding methyltransferase superfamily. RNA M5U methyltransferase family.

This is an uncharacterized protein from Listeria monocytogenes serotype 4b (strain F2365).